The following is a 556-amino-acid chain: 2-succinyl-5-enolpyruvyl-6-hydroxy-3-cyclohexene-1-carboxylate synthase (556 aa).

It belongs to the TPP enzyme family. MenD subfamily. Homodimer. The cofactor is Mg(2+). Requires Mn(2+) as cofactor. It depends on thiamine diphosphate as a cofactor.

It catalyses the reaction isochorismate + 2-oxoglutarate + H(+) = 5-enolpyruvoyl-6-hydroxy-2-succinyl-cyclohex-3-ene-1-carboxylate + CO2. It functions in the pathway quinol/quinone metabolism; 1,4-dihydroxy-2-naphthoate biosynthesis; 1,4-dihydroxy-2-naphthoate from chorismate: step 2/7. Its pathway is quinol/quinone metabolism; menaquinone biosynthesis. Functionally, catalyzes the thiamine diphosphate-dependent decarboxylation of 2-oxoglutarate and the subsequent addition of the resulting succinic semialdehyde-thiamine pyrophosphate anion to isochorismate to yield 2-succinyl-5-enolpyruvyl-6-hydroxy-3-cyclohexene-1-carboxylate (SEPHCHC). This is 2-succinyl-5-enolpyruvyl-6-hydroxy-3-cyclohexene-1-carboxylate synthase from Mycobacterium leprae (strain Br4923).